We begin with the raw amino-acid sequence, 374 residues long: MPPKQQGPSKKSEQKRKEKVIEDKTFGLKNKKGNKNQKFVAQVENQVRNNNTRMDLVRQQEAAKKKEKDELLDIANLLKPVEQKVAKDVDPKSLLCVFFKQGLCGKGAKCKFSHDLAVAQKTAKKNLYADSREVEKDEETNENWDSDKLNEVVNKKNKNKHMIDIVCKYFLEAVENNKYGWFWECPNGGEKCQYRHCLPEGYVLKKERKAMEQQKEDEISIEELVEKERAALSSKNLTKLTLQTFIAWKKKKLRERKEKEEADLKEKKEKIKSGKHNGMSGRDLFLYDANLVNNDDDEAGDIEMEKEEVDENEKVFEIDANFFKFDGMDDELTDQMSKSSTAVESTAKGMAKMDINEDLFDIDEDVENLDSDED.

Residues 1–20 (MPPKQQGPSKKSEQKRKEKV) form a disordered region. Residues 10 to 20 (KKSEQKRKEKV) show a composition bias toward basic and acidic residues. C3H1-type zinc fingers lie at residues 90 to 117 (DPKS…HDLA) and 166 to 199 (VCKY…HCLP).

This sequence belongs to the ZC3H15/TMA46 family.

The sequence is that of Zinc finger CCCH domain-containing protein 15 homolog from Caenorhabditis elegans.